We begin with the raw amino-acid sequence, 426 residues long: 26S proteasome regulatory subunit 7B (426 aa).

Position 209-216 (209-216 (GPPGTGKT)) interacts with ATP.

Belongs to the AAA ATPase family.

The protein resides in the cytoplasm. It is found in the nucleus. Its function is as follows. The 26S proteasome is involved in the ATP-dependent degradation of ubiquitinated proteins. The regulatory (or ATPase) complex confers ATP dependency and substrate specificity to the 26S complex. The chain is 26S proteasome regulatory subunit 7B (RPT1B) from Oryza sativa subsp. japonica (Rice).